The sequence spans 147 residues: Sulfur acceptor protein CsdE (147 aa).

Cys-61 functions as the Cysteine persulfide intermediate in the catalytic mechanism. Cys-61 carries the cysteine persulfide modification.

This sequence belongs to the SufE family. In terms of assembly, homodimer. Forms a heterodimer with CsdA. Interacts with CsdA and with TcdA/CsdL.

Its function is as follows. Stimulates the cysteine desulfurase activity of CsdA. Contains a cysteine residue (Cys-61) that acts to accept sulfur liberated via the desulfurase activity of CsdA. May be able to transfer sulfur to TcdA/CsdL. Seems to support the function of TcdA in the generation of cyclic threonylcarbamoyladenosine at position 37 (ct(6)A37) in tRNAs that read codons beginning with adenine. Does not appear to participate in Fe/S biogenesis. The sequence is that of Sulfur acceptor protein CsdE (csdE) from Escherichia coli (strain K12).